The following is a 261-amino-acid chain: uncharacterized protein (261 aa).

Residues I33, K60, D78, and N105 each coordinate NADP(+). S157 serves as the catalytic Proton donor. Residues Y172, K176, and T206 each contribute to the NADP(+) site. Catalysis depends on Y172, which acts as the Proton acceptor. The active-site Lowers pKa of active site Tyr is K176.

This sequence belongs to the short-chain dehydrogenases/reductases (SDR) family.

It localises to the cytoplasm. It is found in the nucleus. This is an uncharacterized protein from Schizosaccharomyces pombe (strain 972 / ATCC 24843) (Fission yeast).